The following is a 251-amino-acid chain: Ubiquinone/menaquinone biosynthesis C-methyltransferase UbiE (251 aa).

S-adenosyl-L-methionine-binding positions include T74, D95, and 123 to 124 (NA).

Belongs to the class I-like SAM-binding methyltransferase superfamily. MenG/UbiE family.

The catalysed reaction is a 2-demethylmenaquinol + S-adenosyl-L-methionine = a menaquinol + S-adenosyl-L-homocysteine + H(+). It catalyses the reaction a 2-methoxy-6-(all-trans-polyprenyl)benzene-1,4-diol + S-adenosyl-L-methionine = a 5-methoxy-2-methyl-3-(all-trans-polyprenyl)benzene-1,4-diol + S-adenosyl-L-homocysteine + H(+). It functions in the pathway quinol/quinone metabolism; menaquinone biosynthesis; menaquinol from 1,4-dihydroxy-2-naphthoate: step 2/2. The protein operates within cofactor biosynthesis; ubiquinone biosynthesis. Its function is as follows. Methyltransferase required for the conversion of demethylmenaquinol (DMKH2) to menaquinol (MKH2) and the conversion of 2-polyprenyl-6-methoxy-1,4-benzoquinol (DDMQH2) to 2-polyprenyl-3-methyl-6-methoxy-1,4-benzoquinol (DMQH2). This Shewanella halifaxensis (strain HAW-EB4) protein is Ubiquinone/menaquinone biosynthesis C-methyltransferase UbiE.